The chain runs to 162 residues: Endoribonuclease YbeY (162 aa).

Residues H128, H132, and H138 each coordinate Zn(2+).

This sequence belongs to the endoribonuclease YbeY family. Zn(2+) is required as a cofactor.

The protein resides in the cytoplasm. Single strand-specific metallo-endoribonuclease involved in late-stage 70S ribosome quality control and in maturation of the 3' terminus of the 16S rRNA. The sequence is that of Endoribonuclease YbeY from Lactococcus lactis subsp. cremoris (strain SK11).